A 928-amino-acid polypeptide reads, in one-letter code: Arf guanine nucleotide exchange factor sec74 (928 aa).

Composition is skewed to polar residues over residues 1–12 (MDESSRIASSSA) and 57–83 (TITSDTPKVSSQHSPVSSAYTGDSTTD). Disordered stretches follow at residues 1 to 152 (MDES…RPSS) and 227 to 249 (SLSSNFSARTPASNQSSVSEDFG). S67 carries the post-translational modification Phosphoserine. Low complexity-rich tracts occupy residues 89 to 102 (GHSSSQKLSNKVSS) and 115 to 132 (SKSSSSQCSSPFLPTSSS). Positions 228–420 (LSSNFSARTP…ECFYDNITYT (193 aa)) constitute an SEC7 domain. The span at 234–245 (ARTPASNQSSVS) shows a compositional bias: polar residues. A PH domain is found at 548–677 (KVFKLGILIQ…WLVKINFVST (130 aa)).

Its subcellular location is the cytoplasm. The protein resides in the cell tip. Functionally, guanine nucleotide exchange factor for Arf GTPases, stimulating the nucleotide exchange from the GDP-bound to the GTP-bound form. Involved in vesicular transport. The polypeptide is Arf guanine nucleotide exchange factor sec74 (sec74) (Schizosaccharomyces pombe (strain 972 / ATCC 24843) (Fission yeast)).